The following is a 345-amino-acid chain: MSTAAPNETTQPTVQSGQKRVGVLLVNLGTPDTADAPGVRVYLKEFLSDARVIEDQGLVWKVVLNGIILRSRPRTKALDYQKIWNNEKNESPLKTITRSQSDKLAAALSDRDHVVVDWAMRYGNPSIKSGIDALIAEGCDRILAVPLYPQYSASTSATVCDEVFRVLARLRAQPTLRVTPPYYEDEAYIEALAVSIETHLATLPFKPELIVASFHGMPKSYVDKGDPYQEHCIATTEALRRRLGVDASKLLLTFQSRFGNDEWLQPYTDKTMERLAKEGVRRIAVVTPGFAADCLETLEEIAQENAEIFKHNGGEQFSAIPCLNDSEPGMDVIRTLVLRELQGWI.

Residues His-215 and Glu-296 each coordinate Fe cation.

The protein belongs to the ferrochelatase family.

The protein resides in the cytoplasm. The enzyme catalyses heme b + 2 H(+) = protoporphyrin IX + Fe(2+). Its pathway is porphyrin-containing compound metabolism; protoheme biosynthesis; protoheme from protoporphyrin-IX: step 1/1. In terms of biological role, catalyzes the ferrous insertion into protoporphyrin IX. Essential for normal nodule development. The sequence is that of Ferrochelatase from Bradyrhizobium diazoefficiens (strain JCM 10833 / BCRC 13528 / IAM 13628 / NBRC 14792 / USDA 110).